A 518-amino-acid polypeptide reads, in one-letter code: Cytochrome P450 monooxygenase COX1 (518 aa).

A helical transmembrane segment spans residues 7 to 25 (VLIALSSIVVAYFVKTALA). 5 N-linked (GlcNAc...) asparagine glycosylation sites follow: Asn-48, Asn-100, Asn-292, Asn-302, and Asn-351. Residue Cys-450 coordinates heme. An N-linked (GlcNAc...) asparagine glycan is attached at Asn-457.

The protein belongs to the cytochrome P450 family. It depends on heme as a cofactor.

The protein resides in the membrane. Its pathway is secondary metabolite biosynthesis. In terms of biological role, cytochrome P450 monooxygenase; part of the gene cluster that mediates the biosynthesis of alpha-cuprenene and oxidized derivatives. The alpha-cuprenene synthase COP6 is the only sesquiterpene synthase identified in C.cinereus that appears to be part of a biosynthetic gene cluster and is highly specific since it catalyzes the cyclization of (2E,6E)-farnesyl diphosphate into only one product, alpha-cuprenene. The cytochrome P450 monooxygenase COX2 then oxidizes the cyclohexadiene ring of alpha-cuprenene at positions 1 and 4, yielding first alpha-cuparene, followed by alpha-cuparophenol and a further yet unidentified compound resulting from one additional oxidation step. The cytochrome P450 monooxygenase COX1 then likely catalyzes the oxidation at position 9 of the pentane ring of alpha-cuprenene to give the corresponding hydroxy or ketone derivatives. The sequence is that of Cytochrome P450 monooxygenase COX1 from Coprinopsis cinerea (strain Okayama-7 / 130 / ATCC MYA-4618 / FGSC 9003) (Inky cap fungus).